The chain runs to 225 residues: uncharacterized protein (225 aa).

Helical transmembrane passes span 40 to 60 (LISLAAVFFCHSGMEALLSIV), 63 to 83 (LAFFHAGTALSSLLASLPFSF), 151 to 171 (LSETNLSIVFCILTTSSLTIL), and 176 to 196 (IFSLLLVVCTSACFSSAIVSL).

It is found in the membrane. This is an uncharacterized protein from Saccharomyces cerevisiae (strain ATCC 204508 / S288c) (Baker's yeast).